The sequence spans 648 residues: Protein kinase YegI (648 aa).

In terms of domain architecture, Protein kinase spans 15–302 (TTLGRELGKG…KAWVAALDSL (288 aa)). ATP is bound by residues 21 to 29 (LGKGGEGAV) and Lys-41. Asp-143 functions as the Proton acceptor in the catalytic mechanism.

Post-translationally, autophosphorylated. Dephosphorylated by PphC.

Probable serine/threonine kinase. This Escherichia coli (strain K12) protein is Protein kinase YegI (yegI).